We begin with the raw amino-acid sequence, 296 residues long: Bifunctional protein FolD (296 aa).

NADP(+) contacts are provided by residues 166 to 168, Ser-195, and Thr-236; that span reads GRS.

Belongs to the tetrahydrofolate dehydrogenase/cyclohydrolase family. In terms of assembly, homodimer.

It catalyses the reaction (6R)-5,10-methylene-5,6,7,8-tetrahydrofolate + NADP(+) = (6R)-5,10-methenyltetrahydrofolate + NADPH. It carries out the reaction (6R)-5,10-methenyltetrahydrofolate + H2O = (6R)-10-formyltetrahydrofolate + H(+). It participates in one-carbon metabolism; tetrahydrofolate interconversion. Functionally, catalyzes the oxidation of 5,10-methylenetetrahydrofolate to 5,10-methenyltetrahydrofolate and then the hydrolysis of 5,10-methenyltetrahydrofolate to 10-formyltetrahydrofolate. The polypeptide is Bifunctional protein FolD (Dehalococcoides mccartyi (strain ATCC BAA-2266 / KCTC 15142 / 195) (Dehalococcoides ethenogenes (strain 195))).